Consider the following 299-residue polypeptide: Oxygen-dependent coproporphyrinogen-III oxidase (299 aa).

Ser92 lines the substrate pocket. A divalent metal cation contacts are provided by His96 and His106. His106 acts as the Proton donor in catalysis. 108-110 (NVR) serves as a coordination point for substrate. Residues His145 and His175 each coordinate a divalent metal cation. The interval 239 to 274 (YVEFNLVYDRGTLFGLQSGGRAESILMSLPPRVRWE) is important for dimerization. Position 257 to 259 (257 to 259 (GGR)) interacts with substrate.

It belongs to the aerobic coproporphyrinogen-III oxidase family. As to quaternary structure, homodimer. The cofactor is a divalent metal cation.

The protein resides in the cytoplasm. It catalyses the reaction coproporphyrinogen III + O2 + 2 H(+) = protoporphyrinogen IX + 2 CO2 + 2 H2O. It participates in porphyrin-containing compound metabolism; protoporphyrin-IX biosynthesis; protoporphyrinogen-IX from coproporphyrinogen-III (O2 route): step 1/1. Involved in the heme biosynthesis. Catalyzes the aerobic oxidative decarboxylation of propionate groups of rings A and B of coproporphyrinogen-III to yield the vinyl groups in protoporphyrinogen-IX. This chain is Oxygen-dependent coproporphyrinogen-III oxidase, found in Xanthomonas euvesicatoria pv. vesicatoria (strain 85-10) (Xanthomonas campestris pv. vesicatoria).